We begin with the raw amino-acid sequence, 132 residues long: ATP synthase epsilon chain, cyanelle (132 aa).

Belongs to the ATPase epsilon chain family. F-type ATPases have 2 components, CF(1) - the catalytic core - and CF(0) - the membrane proton channel. CF(1) has five subunits: alpha(3), beta(3), gamma(1), delta(1), epsilon(1). CF(0) has three main subunits: a, b and c.

The protein localises to the plastid. It is found in the cyanelle thylakoid membrane. In terms of biological role, produces ATP from ADP in the presence of a proton gradient across the membrane. The polypeptide is ATP synthase epsilon chain, cyanelle (Cyanophora paradoxa).